The chain runs to 250 residues: Probable transcriptional regulatory protein PERMA_0079 (250 aa).

It belongs to the TACO1 family.

The protein localises to the cytoplasm. The protein is Probable transcriptional regulatory protein PERMA_0079 of Persephonella marina (strain DSM 14350 / EX-H1).